The chain runs to 196 residues: Large ribosomal subunit protein eL15 (196 aa).

The segment at aspartate 153–lysine 196 is disordered. Residues arginine 159–arginine 172 show a composition bias toward basic residues.

The protein belongs to the eukaryotic ribosomal protein eL15 family.

The protein is Large ribosomal subunit protein eL15 of Methanosarcina acetivorans (strain ATCC 35395 / DSM 2834 / JCM 12185 / C2A).